The chain runs to 424 residues: Galacturonokinase (424 aa).

N-acetylserine is present on Ser2. ATP is bound at residue 146-155 (DSSGLSSSAA). The active-site Proton acceptor is Asp197.

The protein belongs to the GHMP kinase family. Requires Mg(2+) as cofactor. Mn(2+) is required as a cofactor. It depends on Ca(2+) as a cofactor. Expressed in roots, stems, leaves, flowers and young siliques. Higher expression in the elongating middle stem region than in the lower or upper stem region.

It carries out the reaction D-galacturonate + ATP = 1-phospho-alpha-D-galacturonate + ADP + H(+). With respect to regulation, inhibited by EDTA and ADP. Sugar-1-kinase with a strict substrate specificity for the alpha-anomeric configuration of D-galacturonic acid (D-GalA) and ATP. Involved in the biosynthesis of UDP-galacturonic acid (UDP-GalA) from the salvaged GalA that is released during growth-dependent cell wall restructuring. This is Galacturonokinase (GALAK) from Arabidopsis thaliana (Mouse-ear cress).